The chain runs to 308 residues: MTTTNKKTRYSAIKPSERLPEWIKPSLGTASQLEKVQNLVKEYRLNTICEEGRCPNRGECYASGTATFLLGGSICTRSCAFCQVEKGMPPQNIDPNESIRVAKAVLKLQLKYVVLTSVARDDLDDHGAIHFSRTIHAIRKTSPTTSIEVLTPDFWGGCIDKIKATKIQRERLKIVLKAKPVCFNHNLETVERLQKEVRRGATYHRSLELLKASREIDNEIPTKSGLMLGLGERSDEIIQTLKDLRSVNCQQVTIGQYLRPSLAHIPVQKYWLPKDFEHFKRIAEGLGFKKVNSGPLVRSSYHAELPQT.

7 residues coordinate [4Fe-4S] cluster: Cys49, Cys54, Cys60, Cys75, Cys79, Cys82, and Ser300. A Radical SAM core domain is found at 61–289 (YASGTATFLL…KRIAEGLGFK (229 aa)).

This sequence belongs to the radical SAM superfamily. Lipoyl synthase family. [4Fe-4S] cluster is required as a cofactor.

It is found in the cytoplasm. It carries out the reaction [[Fe-S] cluster scaffold protein carrying a second [4Fe-4S](2+) cluster] + N(6)-octanoyl-L-lysyl-[protein] + 2 oxidized [2Fe-2S]-[ferredoxin] + 2 S-adenosyl-L-methionine + 4 H(+) = [[Fe-S] cluster scaffold protein] + N(6)-[(R)-dihydrolipoyl]-L-lysyl-[protein] + 4 Fe(3+) + 2 hydrogen sulfide + 2 5'-deoxyadenosine + 2 L-methionine + 2 reduced [2Fe-2S]-[ferredoxin]. It participates in protein modification; protein lipoylation via endogenous pathway; protein N(6)-(lipoyl)lysine from octanoyl-[acyl-carrier-protein]: step 2/2. In terms of biological role, catalyzes the radical-mediated insertion of two sulfur atoms into the C-6 and C-8 positions of the octanoyl moiety bound to the lipoyl domains of lipoate-dependent enzymes, thereby converting the octanoylated domains into lipoylated derivatives. This chain is Lipoyl synthase 2, found in Prochlorococcus marinus (strain SARG / CCMP1375 / SS120).